The primary structure comprises 746 residues: Ribosome biogenesis protein BOP1 (746 aa).

Residues Met-1–Ala-116 are disordered. Residues Ser-43–Asp-65 show a composition bias toward low complexity. Positions Ser-66–Asp-87 are enriched in acidic residues. Residues Asp-88–Glu-99 show a composition bias toward basic and acidic residues. Phosphothreonine is present on Thr-106. Tyr-122 is subject to Phosphotyrosine. Phosphoserine occurs at positions 126 and 127. The segment at Met-265–Trp-427 is sufficient for nucleolar localization. WD repeat units lie at residues Gly-411 to Thr-450, Pro-452 to Ala-492, Cys-532 to Arg-576, Arg-577 to Lys-615, Pro-618 to Arg-657, His-661 to Gln-700, and Thr-716 to Thr-746.

The protein belongs to the WD repeat BOP1/ERB1 family. Component of the PeBoW complex, composed of BOP1, PES1 and WDR12. The complex is held together by BOP1, which interacts with PES1 via its N-terminal domain and with WDR12 via a high-affinity interaction between the seven-bladed beta-propeller domains of the 2 proteins. The NOP7 complex associates with the 66S pre-ribosome. The PeBoW complex associates with DDX27, BOP1 interacts directly with DDX27.

The protein resides in the nucleus. The protein localises to the nucleolus. Its subcellular location is the nucleoplasm. Component of the PeBoW complex, which is required for maturation of 28S and 5.8S ribosomal RNAs and formation of the 60S ribosome. This chain is Ribosome biogenesis protein BOP1, found in Homo sapiens (Human).